The chain runs to 578 residues: Protein O-linked-mannose beta-1,4-N-acetylglucosaminyltransferase 2 (578 aa).

The Cytoplasmic segment spans residues 1 to 4 (MNIS). Residues 5 to 25 (AVFSALLVSIMAAVLWKHVKL) form a helical; Signal-anchor for type II membrane protein membrane-spanning segment. At 26-578 (LDQFYVIEEE…PFAEVLVCST (553 aa)) the chain is on the lumenal side. 6 N-linked (GlcNAc...) asparagine glycosylation sites follow: asparagine 98, asparagine 275, asparagine 335, asparagine 451, asparagine 541, and asparagine 563. The Fibronectin type-III domain occupies 484-578 (RESKCQASAQ…PFAEVLVCST (95 aa)).

The protein belongs to the glycosyltransferase 61 family.

It is found in the endoplasmic reticulum membrane. The enzyme catalyses 3-O-(alpha-D-mannosyl)-L-threonyl-[protein] + UDP-N-acetyl-alpha-D-glucosamine = 3-O-(N-acetyl-beta-D-glucosaminyl-(1-&gt;4)-alpha-D-mannosyl)-L-threonyl-[protein] + UDP + H(+). It functions in the pathway protein modification; protein glycosylation. Its function is as follows. O-linked mannose beta-1,4-N-acetylglucosaminyltransferase that transfers UDP-N-acetyl-D-glucosamine to the 4-position of the mannose to generate N-acetyl-D-glucosamine-beta-1,4-O-D-mannosylprotein. Involved in the biosynthesis of the phosphorylated O-mannosyl trisaccharide (N-acetylgalactosamine-beta-3-N-acetylglucosamine-beta-4-(phosphate-6-)mannose), a carbohydrate structure present in alpha-dystroglycan (DAG1), which is required for binding laminin G-like domain-containing extracellular proteins with high affinity. This chain is Protein O-linked-mannose beta-1,4-N-acetylglucosaminyltransferase 2 (pomgnt2), found in Xenopus laevis (African clawed frog).